Reading from the N-terminus, the 304-residue chain is Acetylglutamate kinase (304 aa).

Substrate contacts are provided by residues 69–70 (GG), Arg-91, and Asn-202.

This sequence belongs to the acetylglutamate kinase family. ArgB subfamily.

It is found in the cytoplasm. It carries out the reaction N-acetyl-L-glutamate + ATP = N-acetyl-L-glutamyl 5-phosphate + ADP. The protein operates within amino-acid biosynthesis; L-arginine biosynthesis; N(2)-acetyl-L-ornithine from L-glutamate: step 2/4. Catalyzes the ATP-dependent phosphorylation of N-acetyl-L-glutamate. The polypeptide is Acetylglutamate kinase (Caulobacter vibrioides (strain ATCC 19089 / CIP 103742 / CB 15) (Caulobacter crescentus)).